We begin with the raw amino-acid sequence, 352 residues long: Probable transcription factor At1g11510 (352 aa).

Disordered regions lie at residues 1 to 132 and 239 to 269; these read MSRR…GGEE and MKSNEKSKKSSKFESVKHELDSSLPNSKNNC. The span at 56 to 66 shows a compositional bias: acidic residues; that stretch reads SGSDEETDSDS. Basic and acidic residues-rich tracts occupy residues 89 to 101, 117 to 132, and 241 to 259; these read KTSEKSGAKRSLE, VSGEEEKKKSGGGGEE, and SNEKSKKSSKFESVKHELD.

The protein belongs to the GeBP family.

This chain is Probable transcription factor At1g11510, found in Arabidopsis thaliana (Mouse-ear cress).